Consider the following 507-residue polypeptide: ATP synthase subunit alpha (507 aa).

The tract at residues 118–141 (VDGLGPIETTETRPIESPAPGVMD) is disordered. 172-179 (GDRQTGKT) contributes to the ATP binding site.

This sequence belongs to the ATPase alpha/beta chains family. As to quaternary structure, F-type ATPases have 2 components, CF(1) - the catalytic core - and CF(0) - the membrane proton channel. CF(1) has five subunits: alpha(3), beta(3), gamma(1), delta(1), epsilon(1). CF(0) has three main subunits: a(1), b(2) and c(9-12). The alpha and beta chains form an alternating ring which encloses part of the gamma chain. CF(1) is attached to CF(0) by a central stalk formed by the gamma and epsilon chains, while a peripheral stalk is formed by the delta and b chains.

Its subcellular location is the cell membrane. It carries out the reaction ATP + H2O + 4 H(+)(in) = ADP + phosphate + 5 H(+)(out). Its function is as follows. Produces ATP from ADP in the presence of a proton gradient across the membrane. The alpha chain is a regulatory subunit. This chain is ATP synthase subunit alpha, found in Anoxybacillus flavithermus (strain DSM 21510 / WK1).